The following is a 295-amino-acid chain: Protein LplC (295 aa).

6 helical membrane-spanning segments follow: residues 21–41, 81–101, 116–136, 142–162, 199–219, and 260–280; these read ILFL…IIAG, VSIF…FTMA, LNLV…YLVV, LDTY…LIII, VIAT…FHAL, and GIKL…YPFL. Positions 79–280 constitute an ABC transmembrane type-1 domain; that stretch reads MGVSIFITVV…LPILAVYPFL (202 aa).

It belongs to the binding-protein-dependent transport system permease family. CysTW subfamily.

It is found in the cell membrane. The polypeptide is Protein LplC (lplC) (Bacillus subtilis (strain 168)).